The following is a 256-amino-acid chain: MALAKRIIPCLDVDNGRVVKGVQFENIRDAGDPVEIARRYDEQGADEITFLDITASVDNRDTTLHTVERMASQVFIPLTVGGGVRTVQDIRNLLNAGADKVSINTAAVFNPDFVGEAADRFGSQCIVVAIDAKKVSAPGEPGRWEIFTHGGRKPTGLDAVEWAKKMEALGAGEILLTSMDQDGVKSGYDLGVTRAISEALCIPVIASGGVGNLQHLADGILEGKADAVLAASIFHFGEYTVPEAKAYLAARGIVMR.

Residues aspartate 12 and aspartate 131 contribute to the active site.

The protein belongs to the HisA/HisF family. Heterodimer of HisH and HisF.

Its subcellular location is the cytoplasm. The catalysed reaction is 5-[(5-phospho-1-deoxy-D-ribulos-1-ylimino)methylamino]-1-(5-phospho-beta-D-ribosyl)imidazole-4-carboxamide + L-glutamine = D-erythro-1-(imidazol-4-yl)glycerol 3-phosphate + 5-amino-1-(5-phospho-beta-D-ribosyl)imidazole-4-carboxamide + L-glutamate + H(+). The protein operates within amino-acid biosynthesis; L-histidine biosynthesis; L-histidine from 5-phospho-alpha-D-ribose 1-diphosphate: step 5/9. IGPS catalyzes the conversion of PRFAR and glutamine to IGP, AICAR and glutamate. The HisF subunit catalyzes the cyclization activity that produces IGP and AICAR from PRFAR using the ammonia provided by the HisH subunit. This is Imidazole glycerol phosphate synthase subunit HisF from Stutzerimonas stutzeri (strain A1501) (Pseudomonas stutzeri).